Reading from the N-terminus, the 205-residue chain is MSRFTGPRLKIMRALGVDLPGLSRKTIASRPTPPGQHGAKLVRRRKSDFGIKLQEKQKLRFNYGLSERQLRHLMLNARKSTEPTGETLLQLLERRLDNVVFRAGFAPTVIAARQLVSHRHVRLNGKPVNIPSIRLNVGDEITIKPESLNLPIVLGTLQDLPLSRPEWLLWDEKDKTGKITHLPTAEDVPFPIDVQQVVEYYANRM.

Positions 94–157 (RRLDNVVFRA…LNLPIVLGTL (64 aa)) constitute an S4 RNA-binding domain.

It belongs to the universal ribosomal protein uS4 family. In terms of assembly, part of the 30S ribosomal subunit. Contacts protein S5. The interaction surface between S4 and S5 is involved in control of translational fidelity.

In terms of biological role, one of the primary rRNA binding proteins, it binds directly to 16S rRNA where it nucleates assembly of the body of the 30S subunit. With S5 and S12 plays an important role in translational accuracy. This chain is Small ribosomal subunit protein uS4B, found in Nitrosomonas europaea (strain ATCC 19718 / CIP 103999 / KCTC 2705 / NBRC 14298).